A 206-amino-acid polypeptide reads, in one-letter code: Potassium-transporting ATPase KdpC subunit (206 aa).

Residues 14–34 (VLAVFTLFGLGLAYSLIATGI) form a helical membrane-spanning segment.

The protein belongs to the KdpC family. As to quaternary structure, the system is composed of three essential subunits: KdpA, KdpB and KdpC.

The protein localises to the cell inner membrane. Part of the high-affinity ATP-driven potassium transport (or Kdp) system, which catalyzes the hydrolysis of ATP coupled with the electrogenic transport of potassium into the cytoplasm. This subunit acts as a catalytic chaperone that increases the ATP-binding affinity of the ATP-hydrolyzing subunit KdpB by the formation of a transient KdpB/KdpC/ATP ternary complex. In Xanthomonas axonopodis pv. citri (strain 306), this protein is Potassium-transporting ATPase KdpC subunit.